Here is a 116-residue protein sequence, read N- to C-terminus: Large ribosomal subunit protein bL17 (116 aa).

Belongs to the bacterial ribosomal protein bL17 family. As to quaternary structure, part of the 50S ribosomal subunit. Contacts protein L32.

The protein is Large ribosomal subunit protein bL17 of Prochlorococcus marinus (strain MIT 9211).